Here is a 116-residue protein sequence, read N- to C-terminus: MRVKTGVVRRRRHKKVLKLARGFYSGRRKHFRKAKEQLERSMYYAFRDRKQKKRDFRSLWVVRINAACRMHNTSYSRFMHALKVANIELDRKVLADMAMNDMQAFTSVLESVKEHL.

This sequence belongs to the bacterial ribosomal protein bL20 family.

Its function is as follows. Binds directly to 23S ribosomal RNA and is necessary for the in vitro assembly process of the 50S ribosomal subunit. It is not involved in the protein synthesizing functions of that subunit. This chain is Large ribosomal subunit protein bL20, found in Helicobacter pylori (strain G27).